Reading from the N-terminus, the 548-residue chain is Internalin H (548 aa).

Positions 1–30 (MKKRWNSVFKLVLMVTAILGLSLYVTTSQG) are cleaved as a signal peptide. 7 LRR repeats span residues 93-105 (GVQY…GLEL), 113-127 (LTPL…ELEL), 135-149 (VSAI…TLDL), 157-171 (VTPL…VLYL), 179-193 (ISPL…YLSI), 201-215 (LTPL…TLKA), and 223-236 (ISPL…IEVH). Residues 480–518 (FTKNDNPNPDDPTTNTPTGNGDGTSNPSNSGGNTTLPTA) form a disordered region. The span at 483 to 498 (NDNPNPDDPTTNTPTG) shows a compositional bias: low complexity. The segment covering 504-516 (SNPSNSGGNTTLP) has biased composition (polar residues). The LPXTG sorting signal motif lies at 515–519 (LPTAG). A518 carries the post-translational modification Pentaglycyl murein peptidoglycan amidated alanine. A propeptide spans 519-548 (GDENTMLPIFIGVFLLGTATLILRKTIKVK) (removed by sortase A).

The protein belongs to the internalin family.

Its subcellular location is the secreted. The protein resides in the cell wall. Functionally, contributes to systemic listeriosis in mice by decreasing host IL-6 cytokine production and thus evasion of the host immune response. Does not contribute to invasion of the host intestinal tissue. This Listeria monocytogenes serovar 1/2a (strain ATCC BAA-679 / EGD-e) protein is Internalin H (inlH).